A 435-amino-acid polypeptide reads, in one-letter code: Tektin-4 (435 aa).

The span at 60 to 69 shows a compositional bias: basic and acidic residues; that stretch reads DQSERQRHES. Residues 60–96 are disordered; that stretch reads DQSERQRHESQQLATETQALAQRTQQDSTRTVGERLQ. Residues 70–85 are compositionally biased toward low complexity; sequence QQLATETQALAQRTQQ. Coiled-coil stretches lie at residues 102-180, 310-336, and 363-411; these read KSEL…LLKR, LHKT…DKEA, and FRLL…TNSL.

It belongs to the tektin family. As to quaternary structure, microtubule inner protein component of sperm flagellar doublet microtubules. Post-translationally, ubiquitinated, leading to its degradation. Deubiquitinated by USP16, promoting its stability. In terms of tissue distribution, strongly expressed in spermatozoa. Also detected at low levels in pancreas. Expressed in airway epithelial cells.

It is found in the cytoplasm. It localises to the cytoskeleton. Its subcellular location is the cilium axoneme. The protein resides in the flagellum axoneme. Microtubule inner protein (MIP) part of the dynein-decorated doublet microtubules (DMTs) in cilia and flagellar axoneme. Forms filamentous polymers in the walls of ciliary and flagellar microtubules. Contributes to normal sperm motility. The protein is Tektin-4 of Homo sapiens (Human).